Consider the following 151-residue polypeptide: HTH-type transcriptional regulator FL11 (151 aa).

The region spanning leucine 5–serine 66 is the HTH asnC-type domain. The H-T-H motif DNA-binding region spans leucine 24–arginine 43. Glutamate 98–aspartate 104 lines the L-arginine pocket. Residues asparagine 118, aspartate 122, and threonine 133–threonine 135 each bind L-lysine. Residues aspartate 122 and threonine 133 to threonine 135 contribute to the L-arginine site.

In terms of assembly, homodimer. Binds DNA as a dimer and an octamer. The octamer formed with lysine is stable in solution, but the octamer formed with arginine is unstable without DNA. When crystallized in the absence of DNA, dimers are assembled into helical cylinders with six dimers per turn. In solution, predominantly behaves as a dimer.

With respect to regulation, in the famine mode, FL11 forms dimers and acts as a repressor, leading to growth arrest. In the feast mode, in the presence of high concentrations of lysine or arginine, four dimers assemble into an octamer and cover the fl11 and lysine biosynthesis promoters. This leads to the inhibition of fl11 expression and lysine biosynthesis, decrease of the FL11 concentration in the cell, derepression of the target genes and activation of the metabolism. In terms of biological role, DNA-binding protein involved in the repression of transcription of a large number of genes, thereby arresting growth, in response to environmental changes. Binding sites are identified in promoters of approximately 200 transcription units, including genes involved in ATP synthesis, transmembrane transport, translation and DNA synthesis. The protein is HTH-type transcriptional regulator FL11 of Pyrococcus horikoshii (strain ATCC 700860 / DSM 12428 / JCM 9974 / NBRC 100139 / OT-3).